Consider the following 349-residue polypeptide: Ferredoxin--NADP reductase 1 (349 aa).

Residues E36, K44, Y48, V88, L123, D290, and S331 each coordinate FAD.

Belongs to the ferredoxin--NADP reductase type 2 family. As to quaternary structure, homodimer. FAD serves as cofactor.

The enzyme catalyses 2 reduced [2Fe-2S]-[ferredoxin] + NADP(+) + H(+) = 2 oxidized [2Fe-2S]-[ferredoxin] + NADPH. This Bacillus licheniformis (strain ATCC 14580 / DSM 13 / JCM 2505 / CCUG 7422 / NBRC 12200 / NCIMB 9375 / NCTC 10341 / NRRL NRS-1264 / Gibson 46) protein is Ferredoxin--NADP reductase 1.